Consider the following 358-residue polypeptide: NADH-quinone oxidoreductase subunit H (358 aa).

8 consecutive transmembrane segments (helical) span residues 30–50 (VVIGVCIVALYAILAILLIYM), 96–116 (FLYNLAPFMVIIASFLTFSCL), 129–149 (VGVFFLLAASSIGVVGILLAG), 168–188 (IISYELSVGLSILTMVVLMGT), 201–221 (GWFIFKGHIPALIAFVIYLIA), 265–285 (FIVAAVAATIFLGGWMPLHIV), 297–317 (IPGFIWFFGKAFFVVFLLMWI), and 336–356 (YLVPISMVNLVIMVLIVVFGL).

This sequence belongs to the complex I subunit 1 family. In terms of assembly, NDH-1 is composed of 14 different subunits. Subunits NuoA, H, J, K, L, M, N constitute the membrane sector of the complex.

It localises to the cell inner membrane. The catalysed reaction is a quinone + NADH + 5 H(+)(in) = a quinol + NAD(+) + 4 H(+)(out). NDH-1 shuttles electrons from NADH, via FMN and iron-sulfur (Fe-S) centers, to quinones in the respiratory chain. The immediate electron acceptor for the enzyme in this species is believed to be ubiquinone. Couples the redox reaction to proton translocation (for every two electrons transferred, four hydrogen ions are translocated across the cytoplasmic membrane), and thus conserves the redox energy in a proton gradient. This subunit may bind ubiquinone. This is NADH-quinone oxidoreductase subunit H from Bacteroides fragilis (strain ATCC 25285 / DSM 2151 / CCUG 4856 / JCM 11019 / LMG 10263 / NCTC 9343 / Onslow / VPI 2553 / EN-2).